Here is a 273-residue protein sequence, read N- to C-terminus: Glutamate racemase (273 aa).

Substrate contacts are provided by residues 17–18 and 49–50; these read DS and YG. Residue Cys-80 is the Proton donor/acceptor of the active site. 81-82 is a substrate binding site; the sequence is NT. The Proton donor/acceptor role is filled by Cys-190. 191–192 contributes to the substrate binding site; that stretch reads TH.

The protein belongs to the aspartate/glutamate racemases family.

The catalysed reaction is L-glutamate = D-glutamate. Its pathway is cell wall biogenesis; peptidoglycan biosynthesis. Provides the (R)-glutamate required for cell wall biosynthesis. The polypeptide is Glutamate racemase (Corynebacterium glutamicum (strain ATCC 13032 / DSM 20300 / JCM 1318 / BCRC 11384 / CCUG 27702 / LMG 3730 / NBRC 12168 / NCIMB 10025 / NRRL B-2784 / 534)).